Here is a 97-residue protein sequence, read N- to C-terminus: Co-chaperonin GroES (97 aa).

Belongs to the GroES chaperonin family. As to quaternary structure, heptamer of 7 subunits arranged in a ring. Interacts with the chaperonin GroEL.

Its subcellular location is the cytoplasm. Functionally, together with the chaperonin GroEL, plays an essential role in assisting protein folding. The GroEL-GroES system forms a nano-cage that allows encapsulation of the non-native substrate proteins and provides a physical environment optimized to promote and accelerate protein folding. GroES binds to the apical surface of the GroEL ring, thereby capping the opening of the GroEL channel. In Tolumonas auensis (strain DSM 9187 / NBRC 110442 / TA 4), this protein is Co-chaperonin GroES.